The sequence spans 520 residues: Pantetheine hydrolase VNN2 (520 aa).

Positions 1–22 (MVTSSFPISVAVFALITLQVGT) are cleaved as a signal peptide. The 276-residue stretch at 31–306 (YEHAVILPNK…GKLLLSEVDS (276 aa)) folds into the CN hydrolase domain. N-linked (GlcNAc...) asparagine glycosylation occurs at Asn-39. Residue Glu-80 is the Proton acceptor of the active site. Lys-179 (proton donor) is an active-site residue. Cys-211 serves as the catalytic Nucleophile. 5 N-linked (GlcNAc...) asparagine glycosylation sites follow: Asn-273, Asn-347, Asn-357, Asn-411, and Asn-468. The GPI-anchor amidated cysteine moiety is linked to residue Cys-493. A propeptide spans 494-520 (GTSNSAITYLLIFILLMIIALQNIVML) (removed in mature form).

It belongs to the carbon-nitrogen hydrolase superfamily. BTD/VNN family. As to expression, widely expressed with higher expression in spleen and blood.

The protein localises to the cell membrane. The enzyme catalyses (R)-pantetheine + H2O = cysteamine + (R)-pantothenate. Amidohydrolase that hydrolyzes specifically one of the carboamide linkages in D-pantetheine thus recycling pantothenic acid (vitamin B5) and releasing cysteamine. Involved in the thymus homing of bone marrow cells. May regulate beta-2 integrin-mediated cell adhesion, migration and motility of neutrophil. The protein is Pantetheine hydrolase VNN2 of Homo sapiens (Human).